We begin with the raw amino-acid sequence, 1106 residues long: DNA polymerase delta catalytic subunit (1106 aa).

Positions 1-28 (MDGKRRPGPGPGVPPKRARGGLWDEDEA) are disordered. A Nuclear localization signal motif is present at residues 4–19 (KRRPGPGPGVPPKRAR). R19 carries the post-translational modification Omega-N-methylarginine. A Glycyl lysine isopeptide (Lys-Gly) (interchain with G-Cter in SUMO2) cross-link involves residue K573. Residues C1011, C1014, C1025, and C1028 each coordinate Zn(2+). The CysA-type zinc finger occupies 1011–1028 (CIGCRTVLSHQGAVCKFC). [4Fe-4S] cluster-binding residues include C1057, C1060, C1070, and C1075. Positions 1057-1075 (CQRCQGSLHEDVICTSRDC) match the CysB motif motif.

It belongs to the DNA polymerase type-B family. In terms of assembly, component of the tetrameric DNA polymerase delta complex (Pol-delta4), which consists of POLD1/p125, POLD2/p50, POLD3/p66/p68 and POLD4/p12, with POLD1 bearing both DNA polymerase and 3' to 5' proofreading exonuclease activities. Within Pol-delta4, directly interacts with POLD2 and POLD4. Following genotoxic stress by DNA-damaging agents, such as ultraviolet light and methyl methanesulfonate, or by replication stress induced by treatment with hydroxyurea or aphidicolin, Pol-delta4 is converted into a trimeric form of the complex (Pol-delta3) by POLD4 degradation. Pol-delta3 is the major form at S phase replication sites and DNA damage sites. POLD1 displays different catalytic properties depending upon the complex it is found in. It exhibits higher proofreading activity and fidelity than Pol-delta4, making it particularly well suited to respond to DNA damage. Directly interacts with PCNA, as do POLD3 and POLD4; this interaction stimulates Pol-delta4 polymerase activity. As POLD2 and POLD4, directly interacts with WRNIP1; this interaction stimulates DNA polymerase delta-mediated DNA synthesis, independently of the presence of PCNA. This stimulation may be due predominantly to an increase of initiation frequency and also to increased processivity. Also observed as a dimeric complex with POLD2 (Pol-delta2). Pol-delta2 is relatively insensitive to the PCNA stimulation (2-5-fold) compared to Pol-delta4 that is stimulated by over 50-fold. Interacts with POLDIP2; this interaction is indirect and most probably mediated through POLD2-binding. Interacts with CIAO1. Interacts with POLDIP2. Interacts with RFC1. [4Fe-4S] cluster serves as cofactor.

It localises to the nucleus. It catalyses the reaction DNA(n) + a 2'-deoxyribonucleoside 5'-triphosphate = DNA(n+1) + diphosphate. With respect to regulation, regulated by alteration of quaternary structure. Exhibits burst rates of DNA synthesis are about 5 times faster in the presence of POLD4 (Pol-delta4 complex) than in its absence (Pol-delta3 complex), while the affinity of the enzyme for its DNA and dNTP substrates appears unchanged. The Pol-delta3 complex is more likely to proofread DNA synthesis because it cleaves single-stranded DNA twice as fast and transfers mismatched DNA from the polymerase to the exonuclease sites 9 times faster compared to the Pol-delta3 complex. Pol-delta3 also extends mismatched primers 3 times more slowly in the absence of POLD4. The conversion of Pol-delta4 into Pol-delta3 is induced by genotoxic stress or by replication stress leading POLD4 degradation. Stimulated in the presence of PCNA. This stimulation is further increased in the presence of KCTD13/PDIP1, most probably via direct interaction between KCTD13 and POLD2. Its function is as follows. As the catalytic component of the trimeric (Pol-delta3 complex) and tetrameric DNA polymerase delta complexes (Pol-delta4 complex), plays a crucial role in high fidelity genome replication, including in lagging strand synthesis, and repair. Exhibits both DNA polymerase and 3'- to 5'-exonuclease activities. Requires the presence of accessory proteins POLD2, POLD3 and POLD4 for full activity. Depending upon the absence (Pol-delta3) or the presence of POLD4 (Pol-delta4), displays differences in catalytic activity. Most notably, expresses higher proofreading activity in the context of Pol-delta3 compared with that of Pol-delta4. Although both Pol-delta3 and Pol-delta4 process Okazaki fragments in vitro, Pol-delta3 may be better suited to fulfill this task, exhibiting near-absence of strand displacement activity compared to Pol-delta4 and stalling on encounter with the 5'-blocking oligonucleotides. Pol-delta3 idling process may avoid the formation of a gap, while maintaining a nick that can be readily ligated. Along with DNA polymerase kappa, DNA polymerase delta carries out approximately half of nucleotide excision repair (NER) synthesis following UV irradiation. Under conditions of DNA replication stress, in the presence of POLD3 and POLD4, may catalyze the repair of broken replication forks through break-induced replication (BIR). Involved in the translesion synthesis (TLS) of templates carrying O6-methylguanine, 8oxoG or abasic sites. This Bos taurus (Bovine) protein is DNA polymerase delta catalytic subunit (POLD1).